Consider the following 956-residue polypeptide: Protein translocase subunit SecA (956 aa).

Residues Gln87, 105 to 109, and Asp524 contribute to the ATP site; that span reads GEGKT. Positions 940, 942, 951, and 952 each coordinate Zn(2+).

The protein belongs to the SecA family. Monomer and homodimer. Part of the essential Sec protein translocation apparatus which comprises SecA, SecYEG and auxiliary proteins SecDF-YajC and YidC. Zn(2+) is required as a cofactor.

The protein localises to the cell inner membrane. Its subcellular location is the cytoplasm. The catalysed reaction is ATP + H2O + cellular proteinSide 1 = ADP + phosphate + cellular proteinSide 2.. Part of the Sec protein translocase complex. Interacts with the SecYEG preprotein conducting channel. Has a central role in coupling the hydrolysis of ATP to the transfer of proteins into and across the cell membrane, serving both as a receptor for the preprotein-SecB complex and as an ATP-driven molecular motor driving the stepwise translocation of polypeptide chains across the membrane. The chain is Protein translocase subunit SecA from Beijerinckia indica subsp. indica (strain ATCC 9039 / DSM 1715 / NCIMB 8712).